A 907-amino-acid chain; its full sequence is Clumping factor B (907 aa).

The first 44 residues, 1–44, serve as a signal peptide directing secretion; sequence MKKRIDYLSNKQNKYSIRRFTVGTTSVIVGATILFGIGNHQAQA. The short motif at 15–26 is the YSIRK-G/S signaling motif element; sequence YSIRRFTVGTTS. Composition is skewed to polar residues over residues 44–61 and 68–101; these read ASEQ…NASA and MIET…KPMS. The interval 44–191 is disordered; sequence ASEQSNDTTQ…AQGTSKPSVR (148 aa). The ligand binding A region stretch occupies residues 45–542; it reads SEQSNDTTQS…GSADGDSAVN (498 aa). A compositionally biased stretch (low complexity) spans 102 to 119; sequence TQTSNTTTTEPASTNETP. The segment covering 134–189 has biased composition (polar residues); it reads QDQTVPQEANSQVDNKTTNDANSIATNSELKNPQTLDLPQSSPQTISNAQGTSKPS. Residues 272-276 carry the MIDAS-like motif motif; that stretch reads DYSNS. The segment at 530-879 is disordered; the sequence is YGGGSADGDS…ETGDKSENTN (350 aa). Positions 545–555 are enriched in pro residues; it reads DPTPGPPVDPE. Residues 556 to 831 are compositionally biased toward acidic residues; that stretch reads PSPDPEPEPS…SDSDSDSDSD (276 aa). Residues 835 to 846 are compositionally biased toward polar residues; the sequence is RVTPPNNEQKAP. A compositionally biased stretch (basic and acidic residues) spans 863–876; the sequence is HKTDALPETGDKSE. Positions 868–872 match the LPXTG sorting signal motif; sequence LPETG. A Pentaglycyl murein peptidoglycan amidated threonine modification is found at threonine 871. The propeptide at 872-907 is removed by sortase; sequence GDKSENTNATLFGAMMALLGSLLLFRKRKQDHKEKA.

Belongs to the serine-aspartate repeat-containing protein (SDr) family. Post-translationally, proteolytically cleaved by aureolysin (aur). This cleavage leads to the inactivation of ClfB.

It localises to the secreted. It is found in the cell wall. Its function is as follows. Cell surface-associated protein implicated in virulence by promoting bacterial attachment to both alpha- and beta-chains of human fibrinogen and inducing the formation of bacterial clumps. The chain is Clumping factor B (clfB) from Staphylococcus aureus (strain MW2).